The chain runs to 400 residues: Large envelope protein (400 aa).

Residue Gly-2 is the site of N-myristoyl glycine; by host attachment. Positions 2–119 are pre-S1; sequence GGWLPKPRKG…PPLRDSHPQA (118 aa). The tract at residues 2–174 is pre-S; that stretch reads GGWLPKPRKG…SSRTGDPAPT (173 aa). Topologically, residues 2-181 are virion surface; in external conformation; that stretch reads GGWLPKPRKG…APTMENITSG (180 aa). At 2–253 the chain is on the intravirion; in internal conformation side; the sequence is GGWLPKPRKG…PGYRWMCLRR (252 aa). Residues 84–115 form a disordered region; it reads TLTTVPAVPPPASANRQSGRQPTPISPPLRDS. The segment covering 97-106 has biased composition (polar residues); the sequence is ANRQSGRQPT. Residues 120-174 form a pre-S2 region; it reads IKWNSPAFHQALQDPRVKGLYFPAGGSSSGTVSPVPNIASHISSISSRTGDPAPT. Residues 182 to 202 form a helical membrane-spanning segment; sequence FLGPLLVLQAGFFLLTRILTI. Residues 203 to 253 lie on the Intravirion; in external conformation side of the membrane; it reads PQSLDSWWTSLNFLGGSPVCLGQNSQSPTSNHSPTSCPPICPGYRWMCLRR. A helical transmembrane segment spans residues 254–274; sequence FIIFLFILLLCLIFLLVLLDY. At 275 to 348 the chain is on the virion surface side; sequence QGMLPVCPLI…WASVRFSWLS (74 aa). Asn-320 carries N-linked (GlcNAc...) asparagine; by host glycosylation. Residues 349–369 traverse the membrane as a helical segment; that stretch reads LLVPFVQWFVGLSPTVWLSVI. The Intravirion portion of the chain corresponds to 370 to 375; that stretch reads WMMWYW. A helical transmembrane segment spans residues 376-398; it reads GPRLYNILSPFIPLLPIFFCLWV. Residues 399 to 400 lie on the Virion surface side of the membrane; the sequence is YI.

The protein belongs to the orthohepadnavirus major surface antigen family. Li-HBsAg interacts with capsid protein and with HDV Large delta antigen. Isoform M associates with host chaperone CANX through its pre-S2 N glycan. This association may be essential for M proper secretion. In terms of processing, isoform M is N-terminally acetylated by host at a ratio of 90%, and N-glycosylated by host at the pre-S2 region. Post-translationally, myristoylated.

Its subcellular location is the virion membrane. Its function is as follows. The large envelope protein exists in two topological conformations, one which is termed 'external' or Le-HBsAg and the other 'internal' or Li-HBsAg. In its external conformation the protein attaches the virus to cell receptors and thereby initiating infection. This interaction determines the species specificity and liver tropism. This attachment induces virion internalization predominantly through caveolin-mediated endocytosis. The large envelope protein also assures fusion between virion membrane and endosomal membrane. In its internal conformation the protein plays a role in virion morphogenesis and mediates the contact with the nucleocapsid like a matrix protein. Functionally, the middle envelope protein plays an important role in the budding of the virion. It is involved in the induction of budding in a nucleocapsid independent way. In this process the majority of envelope proteins bud to form subviral lipoprotein particles of 22 nm of diameter that do not contain a nucleocapsid. In Hepatitis B virus genotype A3 (isolate Cameroon/CMR983/1994) (HBV-A), this protein is Large envelope protein.